The sequence spans 106 residues: MNSAVKYPELKIKLESYDSTLLDLTIKKIVEVVKGVNIKIKGPLPLPTKKEVITIIRSPHVDKASREQFEKNTHKRLMILVDVNQGGIDSLKKIKIPVGVTLRFSK.

This sequence belongs to the universal ribosomal protein uS10 family. Part of the 30S ribosomal subunit.

Involved in the binding of tRNA to the ribosomes. The protein is Small ribosomal subunit protein uS10 of Mycoplasma genitalium (strain ATCC 33530 / DSM 19775 / NCTC 10195 / G37) (Mycoplasmoides genitalium).